A 301-amino-acid polypeptide reads, in one-letter code: N-acetylmuramic acid 6-phosphate etherase (301 aa).

In terms of domain architecture, SIS spans 57–220 (VVERLRAGGR…STISMVRLGK (164 aa)). The active-site Proton donor is the Glu85. Glu116 is an active-site residue.

The protein belongs to the GCKR-like family. MurNAc-6-P etherase subfamily. As to quaternary structure, homodimer.

It catalyses the reaction N-acetyl-D-muramate 6-phosphate + H2O = N-acetyl-D-glucosamine 6-phosphate + (R)-lactate. The protein operates within amino-sugar metabolism; N-acetylmuramate degradation. Functionally, specifically catalyzes the cleavage of the D-lactyl ether substituent of MurNAc 6-phosphate, producing GlcNAc 6-phosphate and D-lactate. The chain is N-acetylmuramic acid 6-phosphate etherase from Rubrobacter xylanophilus (strain DSM 9941 / JCM 11954 / NBRC 16129 / PRD-1).